A 240-amino-acid chain; its full sequence is MEKPKYNRIVLKLSGEALAGEQGNGINPTVIQSIAKQVKEIAELDVEVAVVVGGGNLWRGKTGSDLGMDRATADYMGMLATVMNSLALQDSLETLGIQSRVQTSIEMRQVAEPYIRRKAIRHLEKKRVVIFAAGTGNPYFSTDTTAALRAAEIEADVILMAKNNVDGVYNADPRTDETAVKYEKLSYLDVLKDGLAVMDSTASSLCMDNDIPLIVFSIMEEGNIKRAVLGEQIGTIVRGK.

Residue 12–15 (KLSG) participates in ATP binding. Positions 20 to 25 (GEQGNG) are involved in allosteric activation by GTP. G54 provides a ligand contact to UMP. ATP contacts are provided by G55 and R59. Residues D74 and 135–142 (TGNPYFST) each bind UMP. Residues N163, Y169, and D172 each coordinate ATP.

Belongs to the UMP kinase family. As to quaternary structure, homohexamer.

The protein localises to the cytoplasm. It carries out the reaction UMP + ATP = UDP + ADP. Its pathway is pyrimidine metabolism; CTP biosynthesis via de novo pathway; UDP from UMP (UMPK route): step 1/1. With respect to regulation, allosterically activated by GTP. Inhibited by UTP. Its function is as follows. Catalyzes the reversible phosphorylation of UMP to UDP. This Bacillus licheniformis (strain ATCC 14580 / DSM 13 / JCM 2505 / CCUG 7422 / NBRC 12200 / NCIMB 9375 / NCTC 10341 / NRRL NRS-1264 / Gibson 46) protein is Uridylate kinase.